The primary structure comprises 767 residues: ATPase family gene 2 protein homolog B (767 aa).

M1 is modified (N-acetylmethionine). ATP contacts are provided by residues 241–248 and 507–514; these read GPPGVGKT and GPPGCAKT.

It belongs to the AAA ATPase family. AFG2 subfamily. Part of the 55LCC heterohexameric ATPase complex composed at least of AIRIM, AFG2A, AFG2B and CINP. Associates with pre-60S ribosomal particles.

Its subcellular location is the cytoplasm. The protein localises to the cytoskeleton. It localises to the spindle. It is found in the nucleus. It catalyses the reaction ATP + H2O = ADP + phosphate + H(+). With respect to regulation, in the context of 55LCC heterohexameric ATPase complex, the ATPase activity is stimulated by DNA binding and inhibited in presence of RNA. ATP-dependent chaperone part of the 55LCC heterohexameric ATPase complex which is chromatin-associated and promotes replisome proteostasis to maintain replication fork progression and genome stability. Required for replication fork progression, sister chromatid cohesion, and chromosome stability. The ATPase activity is specifically enhanced by replication fork DNA and is coupled to cysteine protease-dependent cleavage of replisome substrates in response to replication fork damage. Uses ATPase activity to process replisome substrates in S-phase, facilitating their proteolytic turnover from chromatin to ensure DNA replication and mitotic fidelity. Plays an essential role in the cytoplasmic maturation steps of pre-60S ribosomal particles by promoting the release of shuttling protein RSL24D1/RLP24 from the pre-ribosomal particles. The sequence is that of ATPase family gene 2 protein homolog B (AFG2B) from Bos taurus (Bovine).